The sequence spans 325 residues: Pyruvate dehydrogenase E1 component subunit beta (325 aa).

E60 contributes to the thiamine diphosphate binding site.

In terms of assembly, heterodimer of an alpha and a beta chain. Thiamine diphosphate is required as a cofactor.

It catalyses the reaction N(6)-[(R)-lipoyl]-L-lysyl-[protein] + pyruvate + H(+) = N(6)-[(R)-S(8)-acetyldihydrolipoyl]-L-lysyl-[protein] + CO2. The pyruvate dehydrogenase complex catalyzes the overall conversion of pyruvate to acetyl-CoA and CO(2). It contains multiple copies of three enzymatic components: pyruvate dehydrogenase (E1), dihydrolipoamide acetyltransferase (E2) and lipoamide dehydrogenase (E3). This chain is Pyruvate dehydrogenase E1 component subunit beta (pdhB), found in Staphylococcus aureus (strain Mu50 / ATCC 700699).